The chain runs to 142 residues: Type II secretion system core protein G (142 aa).

Residues 1–8 constitute a propeptide, leader sequence; that stretch reads MQRRQQSG. The residue at position 9 (Phe9) is an N-methylphenylalanine. Residues 9–29 form a helical membrane-spanning segment; it reads FTLIEIMVVVVILGILAALVV. The interval 121 to 142 is disordered; the sequence is SLGADGKEGGSDNDADIGNWDN.

Belongs to the GSP G family. Type II secretion system is composed of four main components: the outer membrane complex, the inner membrane complex, the cytoplasmic secretion ATPase and the periplasm-spanning pseudopilus. Forms homomultimers. Interacts with pseudopilin tip ternary complex made of XcpX, XcpU, XcpV and XcpW. Interacts with PilA. In terms of processing, cleaved by the prepilin peptidase. Post-translationally, methylated by prepilin peptidase at the amino group of the N-terminal phenylalanine once the leader sequence is cleaved.

It is found in the cell inner membrane. In terms of biological role, core component of the type II secretion system required for the energy-dependent secretion of extracellular factors such as proteases and toxins from the periplasm. Pseudopilin (pilin-like) protein that polymerizes to form the pseudopilus. Further polymerization triggers pseudopilus growth. Type II pseudopilus confers increased bacterial adhesive capabilities. The polypeptide is Type II secretion system core protein G (xcpT) (Pseudomonas aeruginosa (strain ATCC 15692 / DSM 22644 / CIP 104116 / JCM 14847 / LMG 12228 / 1C / PRS 101 / PAO1)).